We begin with the raw amino-acid sequence, 156 residues long: Transcriptional regulator MraZ (156 aa).

SpoVT-AbrB domains are found at residues 7–64 and 93–136; these read KERH…EPSV and LEMV…EPAR.

This sequence belongs to the MraZ family. In terms of assembly, forms oligomers.

Its subcellular location is the cytoplasm. It localises to the nucleoid. The polypeptide is Transcriptional regulator MraZ (Chlorobium phaeovibrioides (strain DSM 265 / 1930) (Prosthecochloris vibrioformis (strain DSM 265))).